A 406-amino-acid polypeptide reads, in one-letter code: Tryptophan synthase beta chain (406 aa).

An N6-(pyridoxal phosphate)lysine modification is found at lysine 97.

Belongs to the TrpB family. In terms of assembly, tetramer of two alpha and two beta chains. Pyridoxal 5'-phosphate serves as cofactor.

It carries out the reaction (1S,2R)-1-C-(indol-3-yl)glycerol 3-phosphate + L-serine = D-glyceraldehyde 3-phosphate + L-tryptophan + H2O. Its pathway is amino-acid biosynthesis; L-tryptophan biosynthesis; L-tryptophan from chorismate: step 5/5. In terms of biological role, the beta subunit is responsible for the synthesis of L-tryptophan from indole and L-serine. This chain is Tryptophan synthase beta chain, found in Lacticaseibacillus casei (strain BL23) (Lactobacillus casei).